A 618-amino-acid chain; its full sequence is Auxin efflux carrier component 3a (618 aa).

The Extracellular portion of the chain corresponds to 1 to 6 (MISGHD). A helical membrane pass occupies residues 7–27 (FYTVMAAVVPLYVAMFLAYGS). Topologically, residues 28-38 (VRWWGIFTPDQ) are cytoplasmic. A helical membrane pass occupies residues 39 to 59 (CSGINRFVAIFAVPLLSFHFI). Valine 51 lines the (indol-3-yl)acetate pocket. Residues 60-70 (STNDPYAMNLR) are Extracellular-facing. Residues 71–90 (FLAADTLQKLLVLAGLAAWS) traverse the membrane as a helical segment. At 91–104 (RLPSRTGAPRLDWS) the chain is on the cytoplasmic side. Residues 105-125 (ITLFSLSTLPNTLVMGIPLLI) traverse the membrane as a helical segment. Asparagine 115 and leucine 117 together coordinate (indol-3-yl)acetate. Topologically, residues 126-134 (AMYGPYSGS) are extracellular. The helical transmembrane segment at 135 to 155 (LMVQIVVLQCIIWYTLMLFLF) threads the bilayer. (indol-3-yl)acetate is bound at residue tyrosine 148. At 156–478 (EFRAARMLIA…LIRNPNTYSS (323 aa)) the chain is on the cytoplasmic side. Residues 281 to 293 (SLQSSRGPTPRQS) show a composition bias toward polar residues. The tract at residues 281–312 (SLQSSRGPTPRQSNFDEHSARPPKPPATTTGA) is disordered. Residues 479-499 (LLGLAWSLVAFRWHVSMPAIV) traverse the membrane as a helical segment. The Extracellular portion of the chain corresponds to 500–502 (EKS). The chain crosses the membrane as a helical span at residues 503 to 523 (ISILSDAGLGMAMFSLGLFMA). The Cytoplasmic segment spans residues 524 to 539 (LQPSIIACGKSAAVVS). The helical transmembrane segment at 540–560 (MAVRFLAGPAVMAAASIAIGL) threads the bilayer. Topologically, residues 561–563 (RGT) are extracellular. Residues 564 to 584 (LLHVAIVQAALPQGIVPFVFA) traverse the membrane as a helical segment. (indol-3-yl)acetate contacts are provided by isoleucine 578 and valine 579. At 585-597 (KEYNVHPAILSTA) the chain is on the cytoplasmic side. The chain crosses the membrane as a helical span at residues 598-618 (VIFGMLIALPITLLYYILLGL).

It belongs to the auxin efflux carrier (TC 2.A.69.1) family. As to quaternary structure, homodimer. As to expression, expressed in coleoptiles, roots, vascular bundles of leaves, shoots, lamina joints and vascular bundles of the lemma and filament. Expressed in stem bases, stems, leaves and young panicles.

It is found in the cell membrane. Its function is as follows. Acts as a component of the auxin efflux carrier. Involved in the polar auxin transport which may regulate crown root development and response to water stress. This chain is Auxin efflux carrier component 3a, found in Oryza sativa subsp. japonica (Rice).